The sequence spans 144 residues: 3-hydroxyacyl-[acyl-carrier-protein] dehydratase FabZ (144 aa).

The active site involves H48.

This sequence belongs to the thioester dehydratase family. FabZ subfamily.

It is found in the cytoplasm. It catalyses the reaction a (3R)-hydroxyacyl-[ACP] = a (2E)-enoyl-[ACP] + H2O. Involved in unsaturated fatty acids biosynthesis. Catalyzes the dehydration of short chain beta-hydroxyacyl-ACPs and long chain saturated and unsaturated beta-hydroxyacyl-ACPs. The chain is 3-hydroxyacyl-[acyl-carrier-protein] dehydratase FabZ from Bacillus anthracis (strain A0248).